The sequence spans 123 residues: Transmembrane protein 80 (123 aa).

4 helical membrane-spanning segments follow: residues 2–22 (LFHL…LMIV), 35–55 (LALD…QLYL), 68–88 (LAAS…FLLW), and 102–122 (VLLV…ADFI).

It is found in the membrane. The protein resides in the cell projection. Its subcellular location is the cilium. The polypeptide is Transmembrane protein 80 (Tmem80) (Mus musculus (Mouse)).